The chain runs to 1700 residues: RNA replication protein (1700 aa).

The 164-residue stretch at Asp299 to Leu462 folds into the Alphavirus-like MT domain. The (+)RNA virus helicase ATP-binding domain maps to Val842–Leu991. Gly868–Thr875 provides a ligand contact to ATP. A (+)RNA virus helicase C-terminal domain is found at Asn992–Pro1128. The RdRp catalytic domain occupies Gly1369–Glu1480.

It belongs to the potexvirus/carlavirus RNA replication protein family.

It carries out the reaction RNA(n) + a ribonucleoside 5'-triphosphate = RNA(n+1) + diphosphate. The enzyme catalyses ATP + H2O = ADP + phosphate + H(+). Functionally, RNA replication. The protein possibly functions as an ATP-binding helicase. The polypeptide is RNA replication protein (Sclerotinia sclerotiorum (White mold)).